The following is a 444-amino-acid chain: Acyl-CoA 6-desaturase (444 aa).

The Cytoplasmic portion of the chain corresponds to 1 to 131; it reads MGKGGNQGEG…DMNLFKTNHV (131 aa). One can recognise a Cytochrome b5 heme-binding domain in the interval 18-95; the sequence is MPTFSWEEIQ…LKPLLIGELA (78 aa). Residues 132–152 traverse the membrane as a helical segment; it reads FFLLLLAHIIALESIAWFTVF. Residues 153 to 157 lie on the Lumenal side of the membrane; that stretch reads YFGNG. A helical transmembrane segment spans residues 158–178; the sequence is WIPTLITAFVLATSQAQAGWL. Over 179–264 the chain is Cytoplasmic; it reads QHDYGHLSVY…KYLPYNHQHE (86 aa). The Histidine box-1 signature appears at 180 to 184; that stretch reads HDYGH. A Histidine box-2 motif is present at residues 217 to 221; it reads HFQHH. The helical transmembrane segment at 265 to 285 threads the bilayer; sequence YFFLIGPPLLIPMYFQYQIIM. Over 286–305 the chain is Lumenal; that stretch reads TMIVHKNWVDLAWAISYYIR. A helical membrane pass occupies residues 306-326; the sequence is FFVTYIPFYGILGALLFLNFI. The Cytoplasmic segment spans residues 327–444; it reads RFLESHWFVW…KLWLDAYLHK (118 aa). The Histidine box-3 motif lies at 382–386; sequence QIEHH.

Belongs to the fatty acid desaturase type 1 family.

The protein resides in the endoplasmic reticulum membrane. It carries out the reaction (9Z,12Z)-octadecadienoyl-CoA + 2 Fe(II)-[cytochrome b5] + O2 + 2 H(+) = (6Z,9Z,12Z)-octadecatrienoyl-CoA + 2 Fe(III)-[cytochrome b5] + 2 H2O. The enzyme catalyses (9Z,12Z,15Z)-octadecatrienoyl-CoA + 2 Fe(II)-[cytochrome b5] + O2 + 2 H(+) = (6Z,9Z,12Z,15Z)-octadecatetraenoyl-CoA + 2 Fe(III)-[cytochrome b5] + 2 H2O. It catalyses the reaction (9Z,12Z,15Z,18Z,21Z)-tetracosapentaenoyl-CoA + 2 Fe(II)-[cytochrome b5] + O2 + 2 H(+) = (6Z,9Z,12Z,15Z,18Z,21Z)-tetracosahexaenoyl-CoA + 2 Fe(III)-[cytochrome b5] + 2 H2O. The catalysed reaction is (11E)-octadecenoyl-CoA + 2 Fe(II)-[cytochrome b5] + O2 + 2 H(+) = (6Z,11E)-octadecadienoyl-CoA + 2 Fe(III)-[cytochrome b5] + 2 H2O. It carries out the reaction (11Z,14Z)-eicosadienoyl-CoA + 2 Fe(II)-[cytochrome b5] + O2 + 2 H(+) = (8Z,11Z,14Z)-eicosatrienoyl-CoA + 2 Fe(III)-[cytochrome b5] + 2 H2O. The enzyme catalyses (11Z,14Z,17Z)-eicosatrienoyl-CoA + 2 Fe(II)-[cytochrome b5] + O2 + 2 H(+) = (8Z,11Z,14Z,17Z)-eicosatetraenoyl-CoA + 2 Fe(III)-[cytochrome b5] + 2 H2O. The protein operates within lipid metabolism; polyunsaturated fatty acid biosynthesis. In terms of biological role, involved in the biosynthesis of highly unsaturated fatty acids (HUFA) from the essential polyunsaturated fatty acids (PUFA) linoleic acid (LA) (18:2n-6) and alpha-linolenic acid (ALA) (18:3n-3) precursors, acting as a fatty acyl-coenzyme A (CoA) desaturase that introduces a cis double bond at carbon 6 of the fatty acyl chain. Catalyzes the first and rate limiting step in this pathway which is the desaturation of LA (18:2n-6) and ALA (18:3n-3) into gamma-linoleate (GLA) (18:3n-6) and stearidonate (18:4n-3), respectively. Subsequently, in the biosynthetic pathway of HUFA n-3 series, it desaturates tetracosapentaenoate (24:5n-3) to tetracosahexaenoate (24:6n-3), which is then converted to docosahexaenoate (DHA)(22:6n-3), an important lipid for nervous system function. It can also desaturate (11E)-octadecenoate (trans-vaccenoate) at carbon 6 generating (6Z,11E)-octadecadienoate. In addition to Delta-6 activity, this enzyme exhibits Delta-8 activity with slight biases toward n-3 fatty acyl-CoA substrates. The chain is Acyl-CoA 6-desaturase (FADS2) from Macaca fascicularis (Crab-eating macaque).